A 374-amino-acid chain; its full sequence is N-acetyldiaminopimelate deacetylase (374 aa).

The active site involves Asp-68. Residue Glu-127 is the Proton acceptor of the active site.

The protein belongs to the peptidase M20A family. N-acetyldiaminopimelate deacetylase subfamily.

It carries out the reaction N-acetyl-(2S,6S)-2,6-diaminopimelate + H2O = (2S,6S)-2,6-diaminopimelate + acetate. The protein operates within amino-acid biosynthesis; L-lysine biosynthesis via DAP pathway; LL-2,6-diaminopimelate from (S)-tetrahydrodipicolinate (acetylase route): step 3/3. Its function is as follows. Catalyzes the conversion of N-acetyl-diaminopimelate to diaminopimelate and acetate. The sequence is that of N-acetyldiaminopimelate deacetylase from Shouchella clausii (strain KSM-K16) (Alkalihalobacillus clausii).